A 736-amino-acid polypeptide reads, in one-letter code: Catalase-peroxidase (736 aa).

A cross-link (tryptophyl-tyrosyl-methioninium (Trp-Tyr) (with M-250)) is located at residues 96–224 (WHSAGTYRTG…LAAVQMGLIY (129 aa)). The active-site Proton acceptor is the histidine 97. The tryptophyl-tyrosyl-methioninium (Tyr-Met) (with W-96) cross-link spans 224-250 (YVNPEGPDGNPDPVASGRDVRETFGRM). Histidine 265 serves as a coordination point for heme b.

It belongs to the peroxidase family. Peroxidase/catalase subfamily. Homodimer or homotetramer. Requires heme b as cofactor. Formation of the three residue Trp-Tyr-Met cross-link is important for the catalase, but not the peroxidase activity of the enzyme.

It catalyses the reaction H2O2 + AH2 = A + 2 H2O. The enzyme catalyses 2 H2O2 = O2 + 2 H2O. Bifunctional enzyme with both catalase and broad-spectrum peroxidase activity. The polypeptide is Catalase-peroxidase (Pelobacter propionicus (strain DSM 2379 / NBRC 103807 / OttBd1)).